Here is a 162-residue protein sequence, read N- to C-terminus: NAD(P)H-quinone oxidoreductase subunit N (162 aa).

Belongs to the complex I NdhN subunit family. NDH-1 can be composed of about 15 different subunits; different subcomplexes with different compositions have been identified which probably have different functions.

The protein resides in the cellular thylakoid membrane. It catalyses the reaction a plastoquinone + NADH + (n+1) H(+)(in) = a plastoquinol + NAD(+) + n H(+)(out). The catalysed reaction is a plastoquinone + NADPH + (n+1) H(+)(in) = a plastoquinol + NADP(+) + n H(+)(out). In terms of biological role, NDH-1 shuttles electrons from an unknown electron donor, via FMN and iron-sulfur (Fe-S) centers, to quinones in the respiratory and/or the photosynthetic chain. The immediate electron acceptor for the enzyme in this species is believed to be plastoquinone. Couples the redox reaction to proton translocation, and thus conserves the redox energy in a proton gradient. Cyanobacterial NDH-1 also plays a role in inorganic carbon-concentration. This Trichormus variabilis (strain ATCC 29413 / PCC 7937) (Anabaena variabilis) protein is NAD(P)H-quinone oxidoreductase subunit N.